We begin with the raw amino-acid sequence, 1478 residues long: Zinc finger protein 518A (1478 aa).

C2H2-type zinc fingers lie at residues 152–174, 209–231, 236–258, and 264–287; these read FPCEMCSFSASDFQIFKQHRKTH, FQCEECRFFTQDVGTFVQHIHRH, YKCGKCHHLCFTKGELQKHLRVH, and FTCHYCSYGAIHKDQLVRHVITLH. The segment at 355–394 is disordered; sequence TQTKSEDQSQEQLNEEKGGRQHCEDGDKPIESGSEKATVL. K358 participates in a covalent cross-link: Glycyl lysine isopeptide (Lys-Gly) (interchain with G-Cter in SUMO2). A compositionally biased stretch (basic and acidic residues) spans 368–388; the sequence is NEEKGGRQHCEDGDKPIESGS. Glycyl lysine isopeptide (Lys-Gly) (interchain with G-Cter in SUMO2) cross-links involve residues K390 and K428. The tract at residues 464 to 484 is disordered; the sequence is PSPALQPNTEKESTANLPPQA. K518 is covalently cross-linked (Glycyl lysine isopeptide (Lys-Gly) (interchain with G-Cter in SUMO2)). S652 bears the Phosphoserine mark. Residues 656 to 694 are disordered; the sequence is VCENLQRESSNKTVTQQSTSDSDTTSPLRKESSNSDSLL. Low complexity predominate over residues 670–681; sequence TQQSTSDSDTTS. Residues K707, K792, K882, K895, K987, K1008, K1041, K1055, K1078, K1180, and K1441 each participate in a glycyl lysine isopeptide (Lys-Gly) (interchain with G-Cter in SUMO2) cross-link. Residues 1444–1466 form a C2H2-type 5 zinc finger; sequence FNCWFCGRVFDNQDVWAGHGQRH.

Belongs to the krueppel C2H2-type zinc-finger protein family.

It is found in the nucleus. In terms of biological role, through its association with the EHMT1-EHMT2/G9A and PRC2/EED-EZH2 histone methyltransferase complexes may function in gene silencing, regulating repressive post-translational methylation of histone tails at promoters of target genes. The chain is Zinc finger protein 518A (Znf518a) from Rattus norvegicus (Rat).